The sequence spans 58 residues: Small ribosomal subunit protein bS21 (58 aa).

A disordered region spans residues 27 to 58 (GVLSEARKHEHYEKPSVKRKKKSEAARKRKFK). A compositionally biased stretch (basic and acidic residues) spans 31–42 (EARKHEHYEKPS). Positions 43-58 (VKRKKKSEAARKRKFK) are enriched in basic residues.

It belongs to the bacterial ribosomal protein bS21 family.

The polypeptide is Small ribosomal subunit protein bS21 (Desulfitobacterium hafniense (strain DSM 10664 / DCB-2)).